The primary structure comprises 115 residues: Putative HNH nuclease YajD (115 aa).

The HNH domain maps to cysteine 27–lysine 75.

It belongs to the HNH nuclease family.

The polypeptide is Putative HNH nuclease YajD (yajD) (Salmonella typhi).